Reading from the N-terminus, the 453-residue chain is Dibenzothiophene-sulfone monooxygenase (453 aa).

The FMN site is built by aspartate 59, threonine 106, histidine 156, tyrosine 160, and serine 231.

It belongs to the NtaA/SnaA/DszA monooxygenase family. Homodimer.

The protein resides in the cytoplasm. The enzyme catalyses dibenzothiophene 5,5-dioxide + FMNH2 + NADH + O2 = 2'-hydroxybiphenyl-2-sulfinate + FMN + NAD(+) + H2O + H(+). It participates in sulfur metabolism; dibenzothiophene degradation. In terms of biological role, catalyzes the second step of the '4S' desulfurization pathway that removes covalently bound sulfur from dibenzothiophene (DBT) without breaking carbon-carbon bonds. Metabolizes DBT-sulfone (DBTO2 or DBT 5,5-dioxide) to 2-(2'-hydroxyphenyl)benzene sulphinate (HBPS). In Rhodococcus erythropolis (Arthrobacter picolinophilus), this protein is Dibenzothiophene-sulfone monooxygenase.